The primary structure comprises 1299 residues: DExH-box ATP-dependent RNA helicase DExH6 (1299 aa).

An R3H domain is found at 15 to 82 (PTSVEATRIW…QRRLSIFKSR (68 aa)). The region spanning 197–366 (TSAVESNQVI…FGGCPVVRVP (170 aa)) is the Helicase ATP-binding domain. 210 to 217 (GETGCGKT) contacts ATP. Residues 313 to 316 (DEIH) carry the DEIH box motif. The Helicase C-terminal domain maps to 537 to 711 (LIQQLMRKIC…ELCLQVKILD (175 aa)). 2 disordered regions span residues 987 to 1039 (PTGS…MMSS) and 1175 to 1299 (IPRQ…AEQK). Residues 992–1006 (DSDDSNEEEEDDEEV) show a composition bias toward acidic residues. Residues 1007 to 1020 (AANTNEEVAANTNE) show a composition bias toward low complexity. Over residues 1023 to 1032 (MDIHKEESRR) the composition is skewed to basic and acidic residues. Polar residues-rich tracts occupy residues 1176 to 1193 (PRQQNYKQRNPKATNNTD), 1204 to 1214 (NPTNRINQPEA), and 1239 to 1251 (PSDQAYGNKQHNT). A Bipartite nuclear localization signal motif is present at residues 1182–1200 (KQRNPKATNNTDSGKKKEK). The short motif at 1267–1283 (KKTKTRSGNNSDSGKKK) is the Bipartite nuclear localization signal element. Over residues 1279-1299 (SGKKKEQYIPKRQREDKAEQK) the composition is skewed to basic and acidic residues.

It belongs to the DExH box helicase family. In terms of tissue distribution, specifically expressed in the tapetum and vascular tissues.

Its subcellular location is the nucleus. It catalyses the reaction ATP + H2O = ADP + phosphate + H(+). In terms of biological role, may function as an ATP-dependent RNA/DNA helicase. This is DExH-box ATP-dependent RNA helicase DExH6 from Arabidopsis thaliana (Mouse-ear cress).